The chain runs to 765 residues: Probable exo-1,4-beta-xylosidase bxlB (765 aa).

An N-terminal signal peptide occupies residues 1–25 (MYSSNSRRAASILACIVSLTQLGFA). Asparagine 67 and asparagine 107 each carry an N-linked (GlcNAc...) asparagine glycan. Residue aspartate 293 is part of the active site. N-linked (GlcNAc...) asparagine glycans are attached at residues asparagine 345, asparagine 412, asparagine 423, asparagine 464, and asparagine 761.

Belongs to the glycosyl hydrolase 3 family.

The protein localises to the secreted. The catalysed reaction is Hydrolysis of (1-&gt;4)-beta-D-xylans, to remove successive D-xylose residues from the non-reducing termini.. The protein operates within glycan degradation; xylan degradation. Functionally, xylan 1,4-beta-xylosidase involved in the hydrolysis of xylan, a major structural heterogeneous polysaccharide found in plant biomass representing the second most abundant polysaccharide in the biosphere, after cellulose. The protein is Probable exo-1,4-beta-xylosidase bxlB (bxlB) of Aspergillus terreus (strain NIH 2624 / FGSC A1156).